Consider the following 275-residue polypeptide: Interleukin-2 receptor subunit alpha (275 aa).

Residues 1–21 form the signal peptide; it reads MEPSLLMWRFFVFIVVPGCVT. Sushi domains are found at residues 22-81 and 121-186; these read EACH…FCNS and GHCE…KCIS. Residues 22-243 lie on the Extracellular side of the membrane; the sequence is EACHDDPPSL…DTFIFTTEYQ (222 aa). Intrachain disulfides connect cysteine 24–cysteine 64, cysteine 49–cysteine 77, and cysteine 51–cysteine 79. An N-linked (GlcNAc...) asparagine glycan is attached at asparagine 80. Residues 86–130 are disordered; sequence KNPVKPVTPGSEEQRERKPTDAQSQTQPPEQADLPGHCEEPPPWE. Residues 121-130 are compositionally biased toward basic and acidic residues; the sequence is GHCEEPPPWE. 2 cysteine pairs are disulfide-bonded: cysteine 123/cysteine 168 and cysteine 152/cysteine 184. Residues 188–213 form a disordered region; the sequence is GANSQAPDEAEPPESTEAPPGSGTFL. A helical membrane pass occupies residues 244 to 262; sequence IAVAGCILLLSSILLLSCL. Topologically, residues 263–275 are cytoplasmic; sequence TWQRRWKKNRRTI.

Non-covalent dimer of an alpha and a beta subunit. IL2R exists in 3 different forms: a high affinity dimer, an intermediate affinity monomer (beta subunit), and a low affinity monomer (alpha subunit). The high and intermediate affinity forms also associate with a gamma subunit.

The protein resides in the membrane. Receptor for interleukin-2. The receptor is involved in the regulation of immune tolerance by controlling regulatory T cells (TREGs) activity. TREGs suppress the activation and expansion of autoreactive T-cells. The chain is Interleukin-2 receptor subunit alpha (IL2RA) from Ovis aries (Sheep).